Reading from the N-terminus, the 120-residue chain is C-C motif chemokine 16 (120 aa).

Residues 1-23 (MKVSEAALSLLVLILIITSASRS) form the signal peptide. Intrachain disulfides connect C37–C60 and C38–C76.

It belongs to the intercrine beta (chemokine CC) family. In terms of tissue distribution, mainly expressed in liver, also found in spleen and thymus. Highly expressed in LPS- and IFN-gamma-activated monocytes, weakly in some lymphocytes, including natural killer cells, gamma-delta T-cells, and some T-cell clones.

Its subcellular location is the secreted. Shows chemotactic activity for lymphocytes and monocytes but not neutrophils. Also shows potent myelosuppressive activity, suppresses proliferation of myeloid progenitor cells. Recombinant SCYA16 shows chemotactic activity for monocytes and THP-1 monocytes, but not for resting lymphocytes and neutrophils. Induces a calcium flux in THP-1 cells that were desensitized by prior expression to RANTES. This Homo sapiens (Human) protein is C-C motif chemokine 16 (CCL16).